A 496-amino-acid polypeptide reads, in one-letter code: Protein disulfide-isomerase (496 aa).

An N-terminal signal peptide occupies residues 1–18 (MKFLICALFLAASYVAAS). Thioredoxin domains follow at residues 19–134 (AEAE…KKTG) and 349–474 (GKLK…ANGE). Residues C56, C59, C397, and C400 each act as nucleophile in the active site. 2 disulfides stabilise this stretch: C56-C59 and C397-C400. Residues 473-496 (GEVADSEPVEETEEEEEAPKKDEL) form a disordered region. Residues 476-489 (ADSEPVEETEEEEE) show a composition bias toward acidic residues. The short motif at 493-496 (KDEL) is the Prevents secretion from ER element.

This sequence belongs to the protein disulfide isomerase family. Homodimer. As to expression, expressed in all head and body tissues.

The protein localises to the endoplasmic reticulum lumen. The enzyme catalyses Catalyzes the rearrangement of -S-S- bonds in proteins.. In terms of biological role, participates in the folding of proteins containing disulfide bonds. The protein is Protein disulfide-isomerase (Pdi) of Drosophila melanogaster (Fruit fly).